Here is a 347-residue protein sequence, read N- to C-terminus: NADH-quinone oxidoreductase subunit H (347 aa).

8 helical membrane-spanning segments follow: residues 13-33 (LIIALKSVVLLVVLLIVVAYL), 82-102 (GVFLLAPFIFAVLAMATWAVI), 115-135 (VGILYIFAISSLEVYGVIMGG), 161-181 (IGFVIVTVLLTVGSLNLTDIV), 198-218 (FLDWNWLCLFPMFVVFFISAL), 248-268 (FLLFFLGEYVAITLMCALMTV), 286-306 (VPGIIWFMLKLCFCFFLFAMV), and 325-345 (VFLPISLFMVVATATFLKVFG).

This sequence belongs to the complex I subunit 1 family. In terms of assembly, NDH-1 is composed of 14 different subunits. Subunits NuoA, H, J, K, L, M, N constitute the membrane sector of the complex.

The protein localises to the cell inner membrane. The enzyme catalyses a quinone + NADH + 5 H(+)(in) = a quinol + NAD(+) + 4 H(+)(out). Its function is as follows. NDH-1 shuttles electrons from NADH, via FMN and iron-sulfur (Fe-S) centers, to quinones in the respiratory chain. The immediate electron acceptor for the enzyme in this species is believed to be ubiquinone. Couples the redox reaction to proton translocation (for every two electrons transferred, four hydrogen ions are translocated across the cytoplasmic membrane), and thus conserves the redox energy in a proton gradient. This subunit may bind ubiquinone. The sequence is that of NADH-quinone oxidoreductase subunit H from Brucella melitensis biotype 1 (strain ATCC 23456 / CCUG 17765 / NCTC 10094 / 16M).